Consider the following 431-residue polypeptide: ETS domain-containing protein Elk-4 (431 aa).

A DNA-binding region (ETS) is located at residues 5–85 (ITLWQFLLQL…NGQKFVYKFV (81 aa)). Residues 114-139 (SSSSKDVENGGKDKPPQPGAKTSSRN) are disordered. Over residues 118–128 (KDVENGGKDKP) the composition is skewed to basic and acidic residues. A Glycyl lysine isopeptide (Lys-Gly) (interchain with G-Cter in SUMO2) cross-link involves residue Lys167. Position 180 is a phosphoserine (Ser180). 3 disordered regions span residues 251-282 (TTPPISSIPPLQEPPRTPSPPLSSHPDIDTDI), 294-323 (ENLSLEPKDQDSVLLEKDKVNNSSRSKKPK), and 411-431 (TLSGLDGPSTPGPFSPDLQKT). Over residues 261 to 273 (LQEPPRTPSPPLS) the composition is skewed to pro residues. The segment covering 299–313 (EPKDQDSVLLEKDKV) has biased composition (basic and acidic residues).

The protein belongs to the ETS family. As to quaternary structure, interacts with SIRT7.

It localises to the nucleus. Involved in both transcriptional activation and repression. Interaction with SIRT7 leads to recruitment and stabilization of SIRT7 at promoters, followed by deacetylation of histone H3 at 'Lys-18' (H3K18Ac) and subsequent transcription repression. Forms a ternary complex with the serum response factor (SRF). Requires DNA-bound SRF for ternary complex formation and makes extensive DNA contacts to the 5'side of SRF, but does not bind DNA autonomously. This chain is ETS domain-containing protein Elk-4 (ELK4), found in Homo sapiens (Human).